A 283-amino-acid chain; its full sequence is Cuticle collagen 49 (283 aa).

The N-terminal stretch at 1 to 19 (MWKFVIGSVSTAAFFVSVC) is a signal peptide. The tract at residues 90–283 (EPTKNCPAGP…GYCTCPPRTA (194 aa)) is disordered. Over residues 127–139 (VVIHDMPNPKECI) the composition is skewed to basic and acidic residues. Residues 143 to 155 (AGPPGPPGPPGPL) show a composition bias toward pro residues. A compositionally biased stretch (low complexity) spans 185-204 (QGPPGSAGRAGPRGQAGQPG). Positions 213–271 (GRPGPQGPLGEPGAQGEPGVDGKDGALGAPGRKAENGRPGKRGKDGVAGVPGTRGKEGE) constitute a Collagen-like domain. The span at 244–257 (RKAENGRPGKRGKD) shows a compositional bias: basic and acidic residues.

Belongs to the cuticular collagen family. Collagen polypeptide chains are complexed within the cuticle by disulfide bonds and other types of covalent cross-links.

Probable cuticular collagen-like protein. Nematode cuticles are composed largely of collagen-like proteins. The cuticle functions both as an exoskeleton and as a barrier to protect the worm from its environment. Acts downstream of the Wnt signaling pathway, perhaps in the formation of the adult cuticle. In Caenorhabditis elegans, this protein is Cuticle collagen 49.